A 189-amino-acid polypeptide reads, in one-letter code: Crossover junction endodeoxyribonuclease RuvC (189 aa).

Catalysis depends on residues aspartate 11, glutamate 71, and aspartate 143. Residues aspartate 11, glutamate 71, and aspartate 143 each contribute to the Mg(2+) site.

It belongs to the RuvC family. As to quaternary structure, homodimer which binds Holliday junction (HJ) DNA. The HJ becomes 2-fold symmetrical on binding to RuvC with unstacked arms; it has a different conformation from HJ DNA in complex with RuvA. In the full resolvosome a probable DNA-RuvA(4)-RuvB(12)-RuvC(2) complex forms which resolves the HJ. It depends on Mg(2+) as a cofactor.

The protein localises to the cytoplasm. The enzyme catalyses Endonucleolytic cleavage at a junction such as a reciprocal single-stranded crossover between two homologous DNA duplexes (Holliday junction).. Its function is as follows. The RuvA-RuvB-RuvC complex processes Holliday junction (HJ) DNA during genetic recombination and DNA repair. Endonuclease that resolves HJ intermediates. Cleaves cruciform DNA by making single-stranded nicks across the HJ at symmetrical positions within the homologous arms, yielding a 5'-phosphate and a 3'-hydroxyl group; requires a central core of homology in the junction. The consensus cleavage sequence is 5'-(A/T)TT(C/G)-3'. Cleavage occurs on the 3'-side of the TT dinucleotide at the point of strand exchange. HJ branch migration catalyzed by RuvA-RuvB allows RuvC to scan DNA until it finds its consensus sequence, where it cleaves and resolves the cruciform DNA. The polypeptide is Crossover junction endodeoxyribonuclease RuvC (Methylorubrum populi (strain ATCC BAA-705 / NCIMB 13946 / BJ001) (Methylobacterium populi)).